Consider the following 656-residue polypeptide: Receptor-type tyrosine-protein phosphatase R (656 aa).

An N-terminal signal peptide occupies residues 1 to 23 (MRRAVGFPALCLLLNLHAAGCFS). The O-linked (Xyl...) (chondroitin sulfate) serine glycan is linked to serine 23. The Extracellular portion of the chain corresponds to 25–225 (NNDHFLAIRQ…HEADKIWSKE (201 aa)). N-linked (GlcNAc...) asparagine glycosylation is present at asparagine 128. A helical membrane pass occupies residues 226–248 (GFYAVVIFLSIFIIIVTCLMIIY). Over 249–656 (RLKERLQLSF…ESRLSPETVQ (408 aa)) the chain is Cytoplasmic. Serine 271 carries the phosphoserine modification. Phosphoserine; by PKA is present on serine 338. The 255-residue stretch at 392–646 (LQSEFMEIPM…EFVHHALCLF (255 aa)) folds into the Tyrosine-protein phosphatase domain. Residues aspartate 553, 587–593 (CSAGIGR), and glutamine 631 each bind substrate. The active-site Phosphocysteine intermediate is cysteine 587.

It belongs to the protein-tyrosine phosphatase family. Receptor class 7 subfamily. As to quaternary structure, interacts with MAPKs. As to expression, widely expressed in the brain, most abundant in cerebellum, midbrain, cerebral cortex and hippocampus. Also expressed in heart and skeletal muscle.

It is found in the cytoplasm. It localises to the cell membrane. It catalyses the reaction O-phospho-L-tyrosyl-[protein] + H2O = L-tyrosyl-[protein] + phosphate. Its function is as follows. Sequesters mitogen-activated protein kinases (MAPKs) such as MAPK1, MAPK3 and MAPK14 in the cytoplasm in an inactive form. The MAPKs bind to a dephosphorylated kinase interacting motif, phosphorylation of which by the protein kinase A complex releases the MAPKs for activation and translocation into the nucleus. In Rattus norvegicus (Rat), this protein is Receptor-type tyrosine-protein phosphatase R (Ptprr).